A 270-amino-acid chain; its full sequence is MGNTSSERAALERHGGHKTPRRDSSGGTKDGDRPKILMDSPEDADLFHSEEIKAPEKEEFLAWQRDLEVNDKAPAQARPTVFRWTGGGKEVYLSGSFNNWSKLPLTRSHNNFVAILDLPEGEHQYKFFVDGQWTHDPSEPIVTSQLGTVNNIIQVKKTDFEVFDALMVDSQKCSDVSELSSSPPGPYHQEPYVCKPEERFRAPPILPPHLLQVILNKDTGISCDPALLPEPNHVMLNHLYALSIKDGVMVLSATHRYKKKYVTTLLYKPI.

Residues 1 to 46 (MGNTSSERAALERHGGHKTPRRDSSGGTKDGDRPKILMDSPEDADL) are disordered. Residue Gly2 is the site of N-myristoyl glycine attachment. The residue at position 4 (Thr4) is a Phosphothreonine. Residues Ser5 and Ser6 each carry the phosphoserine modification. Thr19 carries the post-translational modification Phosphothreonine. A compositionally biased stretch (basic and acidic residues) spans 21–36 (RRDSSGGTKDGDRPKI). Ser24 and Ser25 each carry phosphoserine; by autocatalysis. Phosphoserine occurs at positions 40, 96, and 101. Residues 68–163 (EVNDKAPAQA…QVKKTDFEVF (96 aa)) form a glycogen-binding domain region. A Phosphoserine; by autocatalysis modification is found at Ser108. Thr148 is subject to Phosphothreonine. Ser182 carries the phosphoserine modification.

The protein belongs to the 5'-AMP-activated protein kinase beta subunit family. As to quaternary structure, AMPK is a heterotrimer of an alpha catalytic subunit (PRKAA1 or PRKAA2), a beta (PRKAB1 or PRKAB2) and a gamma non-catalytic subunits (PRKAG1, PRKAG2 or PRKAG3). Interacts with FNIP1 and FNIP2. In terms of processing, phosphorylated when associated with the catalytic subunit (PRKAA1 or PRKAA2). Phosphorylated by ULK1; leading to negatively regulate AMPK activity and suggesting the existence of a regulatory feedback loop between ULK1 and AMPK.

In terms of biological role, non-catalytic subunit of AMP-activated protein kinase (AMPK), an energy sensor protein kinase that plays a key role in regulating cellular energy metabolism. In response to reduction of intracellular ATP levels, AMPK activates energy-producing pathways and inhibits energy-consuming processes: inhibits protein, carbohydrate and lipid biosynthesis, as well as cell growth and proliferation. AMPK acts via direct phosphorylation of metabolic enzymes, and by longer-term effects via phosphorylation of transcription regulators. Also acts as a regulator of cellular polarity by remodeling the actin cytoskeleton; probably by indirectly activating myosin. Beta non-catalytic subunit acts as a scaffold on which the AMPK complex assembles, via its C-terminus that bridges alpha (PRKAA1 or PRKAA2) and gamma subunits (PRKAG1, PRKAG2 or PRKAG3). In Pongo abelii (Sumatran orangutan), this protein is 5'-AMP-activated protein kinase subunit beta-1 (PRKAB1).